We begin with the raw amino-acid sequence, 119 residues long: Large ribosomal subunit protein bL20 (119 aa).

Belongs to the bacterial ribosomal protein bL20 family.

Functionally, binds directly to 23S ribosomal RNA and is necessary for the in vitro assembly process of the 50S ribosomal subunit. It is not involved in the protein synthesizing functions of that subunit. This chain is Large ribosomal subunit protein bL20, found in Chloroflexus aggregans (strain MD-66 / DSM 9485).